The primary structure comprises 133 residues: Large ribosomal subunit protein uL15 (133 aa).

The segment at 1–64 (MGLENLKPAK…QPLQRRLPKI (64 aa)) is disordered.

The protein belongs to the universal ribosomal protein uL15 family. As to quaternary structure, part of the 50S ribosomal subunit.

Its function is as follows. Binds to the 23S rRNA. This Helicobacter pylori (strain G27) protein is Large ribosomal subunit protein uL15.